We begin with the raw amino-acid sequence, 126 residues long: Fluoride-specific ion channel FluC 1 (126 aa).

4 consecutive transmembrane segments (helical) span residues 5-25, 39-59, 69-89, and 100-120; these read FILAVAAGGSLGSVARYLVGI, TLFINITGSLLIGLFAGLFAI, IFLIVGICGGYTTFSTFSLDS, and AAGAYMIASVVLSVGALIAGI. Na(+)-binding residues include Gly-77 and Thr-80.

Belongs to the fluoride channel Fluc/FEX (TC 1.A.43) family.

The protein resides in the cell inner membrane. The catalysed reaction is fluoride(in) = fluoride(out). Na(+) is not transported, but it plays an essential structural role and its presence is essential for fluoride channel function. Its function is as follows. Fluoride-specific ion channel. Important for reducing fluoride concentration in the cell, thus reducing its toxicity. This chain is Fluoride-specific ion channel FluC 1, found in Nitrobacter hamburgensis (strain DSM 10229 / NCIMB 13809 / X14).